An 833-amino-acid polypeptide reads, in one-letter code: Protein PAT1 homolog 1 (833 aa).

3 disordered regions span residues 279–313 (DMRE…MHGM), 398–427 (NIRQ…SGMP), and 492–549 (EEAT…DKKL). Positions 303-313 (PSLSPGGMHGM) are enriched in low complexity. The span at 398-408 (NIRQNGPQFSH) shows a compositional bias: polar residues.

This sequence belongs to the PAT1 family.

It localises to the cytoplasm. It is found in the P-body. Its function is as follows. RNA-binding protein involved in deadenylation-dependent decapping of mRNAs, leading to the degradation of mRNAs. Acts as a scaffold protein that connects deadenylation and decapping machinery. Required for the recruitment of P-body components such as cgh-1 in somatic blastomeres. May play a role in recruiting the decapping enzyme dcap-1 to cytoplasmic puncta in the cell body of the posterior touch receptor neuron, PLM. In Caenorhabditis elegans, this protein is Protein PAT1 homolog 1.